A 182-amino-acid polypeptide reads, in one-letter code: uncharacterized protein (182 aa).

The protein resides in the plastid. Its subcellular location is the cyanelle. This is an uncharacterized protein from Cyanophora paradoxa.